The chain runs to 304 residues: Protein INO2 (304 aa).

A bHLH domain is found at 236–290 (VRKWKHVQMEKIRRINTKEAFERLIKSVRTPPKENGKRIPKHILLTCVMNDIKSI).

As to quaternary structure, efficient DNA binding requires dimerization with another bHLH protein.

Its subcellular location is the nucleus. Functionally, positive regulatory factor required for depression of the coregulated phospholipid biosynthetic enzymes. Also involved in the expression of ITR1. This Saccharomyces cerevisiae (strain ATCC 204508 / S288c) (Baker's yeast) protein is Protein INO2 (INO2).